Here is a 142-residue protein sequence, read N- to C-terminus: Transcriptional regulator MraZ (142 aa).

2 consecutive SpoVT-AbrB domains span residues 5 to 47 and 76 to 119; these read EFTH…PLNE and ATDC…SAER.

It belongs to the MraZ family. As to quaternary structure, forms oligomers.

The protein resides in the cytoplasm. It is found in the nucleoid. This chain is Transcriptional regulator MraZ, found in Limosilactobacillus reuteri (strain DSM 20016) (Lactobacillus reuteri).